Consider the following 778-residue polypeptide: Ribonucleoside-diphosphate reductase large subunit (778 aa).

Substrate contacts are provided by residues S177, 192 to 193 (SC), G221, 419 to 423 (NLCIE), and 613 to 617 (PTATS). The cysteines at positions 193 and 439 are disulfide-linked. N419 functions as the Proton acceptor in the catalytic mechanism. C421 serves as the catalytic Cysteine radical intermediate. The active-site Proton acceptor is E423.

This sequence belongs to the ribonucleoside diphosphate reductase large chain family. In terms of assembly, heterotetramer composed of a homodimer of the large subunit (R1) and a homodimer of the small subunit (R2). Larger multisubunit protein complex are also active, composed of (R1)n(R2)n.

It catalyses the reaction a 2'-deoxyribonucleoside 5'-diphosphate + [thioredoxin]-disulfide + H2O = a ribonucleoside 5'-diphosphate + [thioredoxin]-dithiol. With respect to regulation, under complex allosteric control mediated by deoxynucleoside triphosphates and ATP binding. The type of nucleotide bound at the specificity site determines substrate preference. It seems probable that ATP makes the enzyme reduce CDP and UDP, dGTP favors ADP reduction and dTTP favors GDP reduction. In terms of biological role, ribonucleoside-diphosphate reductase holoenzyme provides the precursors necessary for viral DNA synthesis. Allows virus growth in non-dividing cells. Catalyzes the biosynthesis of deoxyribonucleotides from the corresponding ribonucleotides. The sequence is that of Ribonucleoside-diphosphate reductase large subunit from Ornithodoros (relapsing fever ticks).